A 439-amino-acid chain; its full sequence is O-methyltransferase aurJ (439 aa).

Aspartate 283 serves as a coordination point for S-adenosyl-L-methionine. The active-site Proton acceptor is the histidine 338.

It belongs to the class I-like SAM-binding methyltransferase superfamily. Cation-independent O-methyltransferase family. COMT subfamily.

The enzyme catalyses norrubrofusarin + S-adenosyl-L-methionine = rubrofusarin + S-adenosyl-L-homocysteine + H(+). It participates in pigment biosynthesis. Functionally, O-methyltransferase; part of the gene cluster that mediates the biosynthesis of aurofusarin, a red mycelium pigment which is acting as a mycotoxin. The first step is performed by the polyketide synthase which condenses one acetyl-CoA and 6 malonyl-CoA units to form the first intermediate, the cyclic heptaketide and yellow pigment YWA1. The C2 hydroxyl group in the pyrone ring of YWA1 is probably formed during ring closure by an aldol-type cyclization reaction. The dehydratase aurZ then acts as the first tailoring enzyme in the aurofusarin biosynthetic pathway by converting YWA1 to nor-rubrofusarin. Nor-rubrofusarin is then methylated to rubrofusarin by the O-methyltransferase aurJ. Rubrofusarin is then transported across the plasma membrane by the rubrofusarin-specific pump aurT for further enzymatic processing by the extracellular complex composed of GIP1, aurF, aurO and aurS to yield aurofusarin. The polypeptide is O-methyltransferase aurJ (Gibberella zeae (strain ATCC MYA-4620 / CBS 123657 / FGSC 9075 / NRRL 31084 / PH-1) (Wheat head blight fungus)).